The sequence spans 297 residues: Formylmethanofuran--tetrahydromethanopterin formyltransferase (297 aa).

The protein belongs to the FTR family. In terms of assembly, homotetramer.

The protein localises to the cytoplasm. The catalysed reaction is N-formylmethanofuran + 5,6,7,8-tetrahydromethanopterin + H(+) = N(5)-formyl-5,6,7,8-tetrahydromethanopterin + methanofuran. Its pathway is one-carbon metabolism; methanogenesis from CO(2); 5,10-methenyl-5,6,7,8-tetrahydromethanopterin from CO(2): step 2/3. Its function is as follows. Catalyzes the reversible transfer of a formyl group from formylmethanofuran (formyl-MFR) to tetrahydromethanopterin (H(4)MPT) to produce 5-formyl tetrahydromethanopterin (5-formyl-H(4)MPT) and methanofuran (MFR). The sequence is that of Formylmethanofuran--tetrahydromethanopterin formyltransferase from Methanothermobacter thermautotrophicus (strain ATCC 29096 / DSM 1053 / JCM 10044 / NBRC 100330 / Delta H) (Methanobacterium thermoautotrophicum).